The primary structure comprises 319 residues: Cytochrome f (319 aa).

Residues 1–35 (METRNIFSWIKEQITRSISVSLMIYIITRTAVSNA) form the signal peptide. Positions 36, 56, 59, and 60 each coordinate heme. A helical transmembrane segment spans residues 285–305 (VQGLLFFLASVILAQIFLVLK).

The protein belongs to the cytochrome f family. In terms of assembly, the 4 large subunits of the cytochrome b6-f complex are cytochrome b6, subunit IV (17 kDa polypeptide, petD), cytochrome f and the Rieske protein, while the 4 small subunits are PetG, PetL, PetM and PetN. The complex functions as a dimer. It depends on heme as a cofactor.

The protein resides in the plastid. The protein localises to the chloroplast thylakoid membrane. Functionally, component of the cytochrome b6-f complex, which mediates electron transfer between photosystem II (PSII) and photosystem I (PSI), cyclic electron flow around PSI, and state transitions. This Coffea arabica (Arabian coffee) protein is Cytochrome f.